The chain runs to 311 residues: Protoheme IX farnesyltransferase (311 aa).

9 helical membrane-spanning segments follow: residues 32-52 (VMSL…VPIN), 53-73 (PWYG…AGAL), 104-124 (FIFG…FINW), 125-145 (FAAF…TIWL), 153-173 (IVIG…VTTG), 180-200 (FLLF…LSLF), 224-244 (KQIL…CFTG), 245-265 (LGGV…IYFA), and 285-305 (FFFS…ESLV).

This sequence belongs to the UbiA prenyltransferase family. Protoheme IX farnesyltransferase subfamily.

The protein resides in the cell inner membrane. The enzyme catalyses heme b + (2E,6E)-farnesyl diphosphate + H2O = Fe(II)-heme o + diphosphate. The protein operates within porphyrin-containing compound metabolism; heme O biosynthesis; heme O from protoheme: step 1/1. In terms of biological role, converts heme B (protoheme IX) to heme O by substitution of the vinyl group on carbon 2 of heme B porphyrin ring with a hydroxyethyl farnesyl side group. This chain is Protoheme IX farnesyltransferase, found in Bartonella tribocorum (strain CIP 105476 / IBS 506).